We begin with the raw amino-acid sequence, 515 residues long: Histidine ammonia-lyase (515 aa).

Residues 142–144 (ASG) constitute a cross-link (5-imidazolinone (Ala-Gly)). 2,3-didehydroalanine (Ser) is present on S143.

It belongs to the PAL/histidase family. Contains an active site 4-methylidene-imidazol-5-one (MIO), which is formed autocatalytically by cyclization and dehydration of residues Ala-Ser-Gly.

The protein localises to the cytoplasm. It catalyses the reaction L-histidine = trans-urocanate + NH4(+). The protein operates within amino-acid degradation; L-histidine degradation into L-glutamate; N-formimidoyl-L-glutamate from L-histidine: step 1/3. This chain is Histidine ammonia-lyase, found in Bradyrhizobium sp. (strain BTAi1 / ATCC BAA-1182).